Reading from the N-terminus, the 246-residue chain is MASVNVDFEQAGELKIGQVGIANLRVRTLDVPRLVQEMRERVTRAPKLFGRAAVILDFGGLSQVPDLATAKALLDGLHEAGVLPVALAYGTSEIDLLSQQLGVPLLAKFRAQYESAAVSPPPPPPARAEPAPPAARPAPGRMQRTAVRSGQQLYAENCDLTVLSTVGAGAEVIADGSIHIYGTLRGRALAGAQGNPDARIFCRDFHAELVAIAGNYKVLDDVPMDLRGKAVQVWLEQDQIKIAALD.

A disordered region spans residues A116–G140. Residues S119–R136 are compositionally biased toward pro residues.

The protein belongs to the MinC family. Interacts with MinD and FtsZ.

Functionally, cell division inhibitor that blocks the formation of polar Z ring septums. Rapidly oscillates between the poles of the cell to destabilize FtsZ filaments that have formed before they mature into polar Z rings. Prevents FtsZ polymerization. The sequence is that of Probable septum site-determining protein MinC from Xanthomonas oryzae pv. oryzae (strain MAFF 311018).